The following is a 431-amino-acid chain: Asparagine--tRNA ligase 1 (431 aa).

The protein belongs to the class-II aminoacyl-tRNA synthetase family. As to quaternary structure, homodimer.

It localises to the cytoplasm. The catalysed reaction is tRNA(Asn) + L-asparagine + ATP = L-asparaginyl-tRNA(Asn) + AMP + diphosphate + H(+). The protein is Asparagine--tRNA ligase 1 (asnS1) of Lactiplantibacillus plantarum (strain ATCC BAA-793 / NCIMB 8826 / WCFS1) (Lactobacillus plantarum).